Here is a 502-residue protein sequence, read N- to C-terminus: C2H2-type transcription factor MSN2 (502 aa).

2 consecutive C2H2-type zinc fingers follow at residues 385–408 (FVCHLCTRRFRRQEHLKRHFRSLH) and 414–436 (FACGECGKKFSRSDNLTQHSRIH).

It localises to the nucleus. Its function is as follows. Key downstream transcription factor in the HOG1-MAPK pathway. Plays crucial roles in the regulation of growth, conidiation, trap development and fatty acid metabolism. Negatively regulates secondary metabolism such as arthrobotrisins biosynthesis.Also regulates autophagy and endocytosis. In Arthrobotrys oligospora (strain ATCC 24927 / CBS 115.81 / DSM 1491) (Nematode-trapping fungus), this protein is C2H2-type transcription factor MSN2.